The chain runs to 365 residues: Pyridoxal reductase, chloroplastic (365 aa).

The N-terminal 15 residues, 1–15, are a transit peptide targeting the chloroplast; the sequence is MALTLSTTKTFTNIN. Residue Tyr-94 is the Proton donor of the active site.

The protein belongs to the aldo/keto reductase family. In terms of assembly, monomer. In terms of tissue distribution, expressed in cotyledons, embryos, flowers, shoots, roots and seeds.

The protein resides in the plastid. It localises to the chloroplast. It carries out the reaction pyridoxine + NADP(+) = pyridoxal + NADPH + H(+). It participates in cofactor degradation; B6 vitamer degradation; pyridoxal from pyridoxine (dehydrogenase route): step 1/1. Functionally, catalyzes the reduction of pyridoxal (PL) with NADPH and oxidation of pyridoxine (PN) with NADP(+). Involved in the PLP salvage pathway. The chain is Pyridoxal reductase, chloroplastic (PLR1) from Arabidopsis thaliana (Mouse-ear cress).